Reading from the N-terminus, the 350-residue chain is S-adenosylmethionine:tRNA ribosyltransferase-isomerase (350 aa).

This sequence belongs to the QueA family. Monomer.

The protein localises to the cytoplasm. It carries out the reaction 7-aminomethyl-7-carbaguanosine(34) in tRNA + S-adenosyl-L-methionine = epoxyqueuosine(34) in tRNA + adenine + L-methionine + 2 H(+). The protein operates within tRNA modification; tRNA-queuosine biosynthesis. In terms of biological role, transfers and isomerizes the ribose moiety from AdoMet to the 7-aminomethyl group of 7-deazaguanine (preQ1-tRNA) to give epoxyqueuosine (oQ-tRNA). The protein is S-adenosylmethionine:tRNA ribosyltransferase-isomerase of Vibrio campbellii (strain ATCC BAA-1116).